The sequence spans 518 residues: Putative cytochrome P450 CYP13A7 (518 aa).

Heme is bound at residue Cys464.

The protein belongs to the cytochrome P450 family. Heme is required as a cofactor.

Its function is as follows. Cytochromes P450 are a group of heme-thiolate monooxygenases. They oxidize a variety of structurally unrelated compounds, including steroids, fatty acids, and xenobiotics. The sequence is that of Putative cytochrome P450 CYP13A7 (cyp-13A7) from Caenorhabditis elegans.